We begin with the raw amino-acid sequence, 546 residues long: Pyrophosphate--fructose 6-phosphate 1-phosphotransferase (546 aa).

Gly-80 provides a ligand contact to diphosphate. Asp-174 contributes to the Mg(2+) binding site. Substrate-binding positions include 202 to 204 (TID), 241 to 242 (KY), 249 to 251 (MGR), Glu-310, and 420 to 423 (YEGR). The Proton acceptor role is filled by Asp-204.

The protein belongs to the phosphofructokinase type A (PFKA) family. PPi-dependent PFK group II subfamily. Clade 'Long' sub-subfamily. As to quaternary structure, homodimer. Mg(2+) is required as a cofactor. Requires Mn(2+) as cofactor.

The protein localises to the cytoplasm. The enzyme catalyses beta-D-fructose 6-phosphate + diphosphate = beta-D-fructose 1,6-bisphosphate + phosphate + H(+). It functions in the pathway carbohydrate degradation; glycolysis; D-glyceraldehyde 3-phosphate and glycerone phosphate from D-glucose: step 3/4. Its activity is regulated as follows. Non-allosteric. Competitively inhibited by PPi, Pi and fructose 1,6-bisphosphate. Functionally, catalyzes the phosphorylation of D-fructose 6-phosphate, the first committing step of glycolysis. Uses inorganic phosphate (PPi) as phosphoryl donor instead of ATP like common ATP-dependent phosphofructokinases (ATP-PFKs), which renders the reaction reversible, and can thus function both in glycolysis and gluconeogenesis. Consistently, PPi-PFK can replace the enzymes of both the forward (ATP-PFK) and reverse (fructose-bisphosphatase (FBPase)) reactions. The sequence is that of Pyrophosphate--fructose 6-phosphate 1-phosphotransferase from Entamoeba histolytica (strain ATCC 30459 / HM-1:IMSS / ABRM).